Reading from the N-terminus, the 1301-residue chain is DNA-directed RNA polymerase subunit beta (1301 aa).

It belongs to the RNA polymerase beta chain family. In terms of assembly, in plastids the minimal PEP RNA polymerase catalytic core is composed of four subunits: alpha, beta, beta', and beta''. When a (nuclear-encoded) sigma factor is associated with the core the holoenzyme is formed, which can initiate transcription.

The protein resides in the plastid. It localises to the chloroplast. It carries out the reaction RNA(n) + a ribonucleoside 5'-triphosphate = RNA(n+1) + diphosphate. Its function is as follows. DNA-dependent RNA polymerase catalyzes the transcription of DNA into RNA using the four ribonucleoside triphosphates as substrates. This Chlorella vulgaris (Green alga) protein is DNA-directed RNA polymerase subunit beta.